We begin with the raw amino-acid sequence, 110 residues long: Insulin (110 aa).

Residues M1–A24 form the signal peptide. 3 cysteine pairs are disulfide-bonded: C31–C96, C43–C109, and C95–C100. The propeptide at E57 to Q87 is c peptide. The tract at residues D60–S80 is disordered.

Belongs to the insulin family. In terms of assembly, heterodimer of a B chain and an A chain linked by two disulfide bonds.

Its subcellular location is the secreted. Insulin decreases blood glucose concentration. It increases cell permeability to monosaccharides, amino acids and fatty acids. It accelerates glycolysis, the pentose phosphate cycle, and glycogen synthesis in liver. The protein is Insulin (INS) of Felis catus (Cat).